The chain runs to 430 residues: Isochorismate synthase MenF (430 aa).

The active-site Proton acceptor is Lys-187. Catalysis depends on Glu-237, which acts as the Proton donor. Mg(2+) is bound by residues Glu-281 and Glu-414.

This sequence belongs to the isochorismate synthase family. Mg(2+) is required as a cofactor.

The enzyme catalyses chorismate = isochorismate. Its pathway is quinol/quinone metabolism; 1,4-dihydroxy-2-naphthoate biosynthesis; 1,4-dihydroxy-2-naphthoate from chorismate: step 1/7. It functions in the pathway quinol/quinone metabolism; menaquinone biosynthesis. In terms of biological role, catalyzes the conversion of chorismate to isochorismate. In Haemophilus influenzae (strain ATCC 51907 / DSM 11121 / KW20 / Rd), this protein is Isochorismate synthase MenF.